Here is a 711-residue protein sequence, read N- to C-terminus: Polyribonucleotide nucleotidyltransferase (711 aa).

Positions 490 and 496 each coordinate Mg(2+). The KH domain maps to 556-615; that stretch reads PRIETMQIPTDKIREVIGSGGKVIREIVEVSGAKVDINDEGIIKIASPNGEAIKKAYDMI. The 69-residue stretch at 625–693 folds into the S1 motif domain; that stretch reads GMVYTGTVVK…DRGKVRLSMK (69 aa).

It belongs to the polyribonucleotide nucleotidyltransferase family. The cofactor is Mg(2+).

The protein localises to the cytoplasm. It carries out the reaction RNA(n+1) + phosphate = RNA(n) + a ribonucleoside 5'-diphosphate. Functionally, involved in mRNA degradation. Catalyzes the phosphorolysis of single-stranded polyribonucleotides processively in the 3'- to 5'-direction. This is Polyribonucleotide nucleotidyltransferase from Roseobacter denitrificans (strain ATCC 33942 / OCh 114) (Erythrobacter sp. (strain OCh 114)).